The chain runs to 429 residues: 3-phosphoshikimate 1-carboxyvinyltransferase (429 aa).

3-phosphoshikimate contacts are provided by lysine 22, serine 23, and arginine 27. Lysine 22 contributes to the phosphoenolpyruvate binding site. Phosphoenolpyruvate contacts are provided by glycine 94 and arginine 122. 3-phosphoshikimate is bound by residues serine 167, glutamine 169, aspartate 315, and lysine 342. Glutamine 169 is a binding site for phosphoenolpyruvate. The Proton acceptor role is filled by aspartate 315. Residues arginine 346 and arginine 388 each contribute to the phosphoenolpyruvate site.

Belongs to the EPSP synthase family. In terms of assembly, monomer.

It localises to the cytoplasm. It carries out the reaction 3-phosphoshikimate + phosphoenolpyruvate = 5-O-(1-carboxyvinyl)-3-phosphoshikimate + phosphate. Its pathway is metabolic intermediate biosynthesis; chorismate biosynthesis; chorismate from D-erythrose 4-phosphate and phosphoenolpyruvate: step 6/7. In terms of biological role, catalyzes the transfer of the enolpyruvyl moiety of phosphoenolpyruvate (PEP) to the 5-hydroxyl of shikimate-3-phosphate (S3P) to produce enolpyruvyl shikimate-3-phosphate and inorganic phosphate. This is 3-phosphoshikimate 1-carboxyvinyltransferase from Geobacter sp. (strain M21).